Reading from the N-terminus, the 99-residue chain is Small ribosomal subunit protein bS20 (99 aa).

Over residues 1–20 (MASAKPKKKNPRLASGRKRA) the composition is skewed to basic residues. Residues 1–29 (MASAKPKKKNPRLASGRKRARQDVKLNAA) form a disordered region.

The protein belongs to the bacterial ribosomal protein bS20 family.

In terms of biological role, binds directly to 16S ribosomal RNA. The chain is Small ribosomal subunit protein bS20 from Paracidovorax citrulli (strain AAC00-1) (Acidovorax citrulli).